A 263-amino-acid chain; its full sequence is Endonuclease 8 (263 aa).

Catalysis depends on Pro-2, which acts as the Schiff-base intermediate with DNA. The Proton donor role is filled by Glu-3. Lys-53 acts as the Proton donor; for beta-elimination activity in catalysis. DNA is bound by residues Gln-70, Arg-125, and Asn-169. An FPG-type zinc finger spans residues 229-263 (KVFHRDGERCERCGGVIEKTTLSSRPFYWCPGCQH). The active-site Proton donor; for delta-elimination activity is Arg-253.

It belongs to the FPG family. Requires Zn(2+) as cofactor.

It catalyses the reaction 2'-deoxyribonucleotide-(2'-deoxyribose 5'-phosphate)-2'-deoxyribonucleotide-DNA = a 3'-end 2'-deoxyribonucleotide-(2,3-dehydro-2,3-deoxyribose 5'-phosphate)-DNA + a 5'-end 5'-phospho-2'-deoxyribonucleoside-DNA + H(+). In terms of biological role, involved in base excision repair of DNA damaged by oxidation or by mutagenic agents. Acts as a DNA glycosylase that recognizes and removes damaged bases. Has a preference for oxidized pyrimidines, such as thymine glycol, 5,6-dihydrouracil and 5,6-dihydrothymine. Has AP (apurinic/apyrimidinic) lyase activity and introduces nicks in the DNA strand. Cleaves the DNA backbone by beta-delta elimination to generate a single-strand break at the site of the removed base with both 3'- and 5'-phosphates. In Klebsiella pneumoniae (strain 342), this protein is Endonuclease 8.